The following is an 88-amino-acid chain: Adenylosuccinate lyase (88 aa).

Residues 4–5 and 67–69 each bind N(6)-(1,2-dicarboxyethyl)-AMP; these read RY and KHD.

It belongs to the lyase 1 family. Adenylosuccinate lyase subfamily. In terms of assembly, homotetramer and homodimer. Residues from neighboring subunits contribute catalytic and substrate-binding residues to each active site.

The catalysed reaction is N(6)-(1,2-dicarboxyethyl)-AMP = fumarate + AMP. It catalyses the reaction (2S)-2-[5-amino-1-(5-phospho-beta-D-ribosyl)imidazole-4-carboxamido]succinate = 5-amino-1-(5-phospho-beta-D-ribosyl)imidazole-4-carboxamide + fumarate. It participates in purine metabolism; AMP biosynthesis via de novo pathway; AMP from IMP: step 2/2. It functions in the pathway purine metabolism; IMP biosynthesis via de novo pathway; 5-amino-1-(5-phospho-D-ribosyl)imidazole-4-carboxamide from 5-amino-1-(5-phospho-D-ribosyl)imidazole-4-carboxylate: step 2/2. Catalyzes two reactions in de novo purine nucleotide biosynthesis. Catalyzes the breakdown of 5-aminoimidazole- (N-succinylocarboxamide) ribotide (SAICAR or 2-[5-amino-1-(5-phospho-beta-D-ribosyl)imidazole-4-carboxamido]succinate) to 5-aminoimidazole-4-carboxamide ribotide (AICAR or 5-amino-1-(5-phospho-beta-D-ribosyl)imidazole-4-carboxamide) and fumarate, and of adenylosuccinate (ADS or N(6)-(1,2-dicarboxyethyl)-AMP) to adenosine monophosphate (AMP) and fumarate. The sequence is that of Adenylosuccinate lyase (purB) from Spiroplasma citri.